Here is a 248-residue protein sequence, read N- to C-terminus: UPF0173 metal-dependent hydrolase Hlac_1347 (248 aa).

This sequence belongs to the UPF0173 family.

In Halorubrum lacusprofundi (strain ATCC 49239 / DSM 5036 / JCM 8891 / ACAM 34), this protein is UPF0173 metal-dependent hydrolase Hlac_1347.